Reading from the N-terminus, the 134-residue chain is Large ribosomal subunit protein bL17 (134 aa).

It belongs to the bacterial ribosomal protein bL17 family. As to quaternary structure, part of the 50S ribosomal subunit. Contacts protein L32.

In Thioalkalivibrio sulfidiphilus (strain HL-EbGR7), this protein is Large ribosomal subunit protein bL17.